The chain runs to 107 residues: Small ribosomal subunit protein uS17 (107 aa).

The protein belongs to the universal ribosomal protein uS17 family. Part of the 30S ribosomal subunit.

Functionally, one of the primary rRNA binding proteins, it binds specifically to the 5'-end of 16S ribosomal RNA. The protein is Small ribosomal subunit protein uS17 of Thermotoga maritima (strain ATCC 43589 / DSM 3109 / JCM 10099 / NBRC 100826 / MSB8).